A 349-amino-acid chain; its full sequence is Interferon regulatory factor 2 (349 aa).

Residues 5-113 constitute a DNA-binding region (IRF tryptophan pentad repeat); that stretch reads RMRMRPWLEE…NAFRVYRMLP (109 aa). N6-acetyllysine occurs at positions 75 and 78. Residues 117–148 form a disordered region; that stretch reads RPSKKGKKPKTEKEDKVKHIKQEPVESSLGLS. Residues 125-140 are compositionally biased toward basic and acidic residues; the sequence is PKTEKEDKVKHIKQEP. K137 is covalently cross-linked (Glycyl lysine isopeptide (Lys-Gly) (interchain with G-Cter in SUMO); alternate). K137 is covalently cross-linked (Glycyl lysine isopeptide (Lys-Gly) (interchain with G-Cter in SUMO2); alternate). K166 participates in a covalent cross-link: Glycyl lysine isopeptide (Lys-Gly) (interchain with G-Cter in SUMO). S225 carries the post-translational modification Phosphoserine. Residues 228 to 239 are compositionally biased toward polar residues; the sequence is SSYAESETTDSV. Residues 228–251 form a disordered region; it reads SSYAESETTDSVPSDEESAEGRPH. K260 is covalently cross-linked (Glycyl lysine isopeptide (Lys-Gly) (interchain with G-Cter in SUMO2)). K293 is covalently cross-linked (Glycyl lysine isopeptide (Lys-Gly) (interchain with G-Cter in SUMO)). The interval 297–349 is disordered; that stretch reads NPVPYNSSWPPFQDLPLSSSMTPASSSSRPDRETRASVIKKTSDITQARVKSC. Residues 314-324 show a composition bias toward low complexity; it reads SSSMTPASSSS.

The protein belongs to the IRF family. Interacts with BRD7, IRF2BP1 and IRF2BP2. Interacts with CREBBP in growing cells; the interaction acetylates IRF2 and regulates IRF2-dependent H4 promoter activity. Post-translationally, acetylated by CBP/ p300 during cell-growth. Acetylation on Lys-75 is required for stimulation of H4 promoter activity. The major sites of sumoylation are Lys-137 and Lys-293. Sumoylation with SUMO1 increases its transcriptional repressor activity on IRF1 and diminishes its ability to activate ISRE and H4 promoter. As to expression, expressed throughout the epithelium of the colon. Also expressed in lamina propria.

It is found in the nucleus. Specifically binds to the upstream regulatory region of type I IFN and IFN-inducible MHC class I genes (the interferon consensus sequence (ICS)) and represses those genes. Also acts as an activator for several genes including H4 and IL7. Constitutively binds to the ISRE promoter to activate IL7. Involved in cell cycle regulation through binding the site II (HiNF-M) promoter region of H4 and activating transcription during cell growth. Antagonizes IRF1 transcriptional activation. This Homo sapiens (Human) protein is Interferon regulatory factor 2 (IRF2).